A 277-amino-acid chain; its full sequence is MKQLYGVIGNPIGHSLSPVMHNDAFEHLNMDAHYHAFLVEEELLGEAVRGLKALGISGFNVTTPHKVAIMEYLDEIDPLARKIGAVNTVVHKDGRLIGYNTDGIGFVRALQSISNEPLQGKRILLLGSGGASRAIYFSLADVGVKEIDVANRTVDKAKELIAARTADVNSVALSLEKATEEQGNYDIIIQTTTIGMHPHVEHTPLQICSLKKGTIVSDIIYNPFETKILCEAKEQGAIIQNGIDMFVYQGALAFEMWTGRTPNIERMKQLVIEKLGG.

Shikimate is bound by residues 15 to 17 (SLS) and threonine 62. Catalysis depends on lysine 66, which acts as the Proton acceptor. Shikimate contacts are provided by asparagine 87 and aspartate 102. Residues 127-131 (GSGGA), 151-156 (NRTVDK), and isoleucine 219 contribute to the NADP(+) site. Tyrosine 221 contributes to the shikimate binding site. Glycine 242 contacts NADP(+).

This sequence belongs to the shikimate dehydrogenase family. Homodimer.

The enzyme catalyses shikimate + NADP(+) = 3-dehydroshikimate + NADPH + H(+). Its pathway is metabolic intermediate biosynthesis; chorismate biosynthesis; chorismate from D-erythrose 4-phosphate and phosphoenolpyruvate: step 4/7. Functionally, involved in the biosynthesis of the chorismate, which leads to the biosynthesis of aromatic amino acids. Catalyzes the reversible NADPH linked reduction of 3-dehydroshikimate (DHSA) to yield shikimate (SA). The sequence is that of Shikimate dehydrogenase (NADP(+)) from Bacillus cereus (strain B4264).